Consider the following 271-residue polypeptide: Effector CFEM6 (271 aa).

The first 17 residues, 1–17, serve as a signal peptide directing secretion; sequence MKYSMITLGAFAMMAVA. The CFEM domain maps to 18–111; sequence QLSSLPACGQ…LGPATAVVAS (94 aa). Disulfide bonds link C25–C68, C29–C63, C42–C49, and C51–C84. A heme-binding site is contributed by D46. S247 carries GPI-anchor amidated serine lipidation. A propeptide spans 248-271 (removed in mature form); it reads SAGGARQTAFAGLAAAAGFAAIIL.

It belongs to the RBT5 family.

It is found in the cell membrane. It localises to the secreted. Its subcellular location is the host nucleus. The protein localises to the host cell membrane. The protein resides in the host chloroplast envelope. Functionally, appears to function during host infection, and may play a role in suppressing the host immune response. The polypeptide is Effector CFEM6 (Marssonina brunnea f. sp. multigermtubi (strain MB_m1) (Marssonina leaf spot fungus)).